The chain runs to 325 residues: Eukaryotic translation initiation factor 3 subunit I (325 aa).

WD repeat units follow at residues 8–47, 50–91, 144–183, and 186–225; these read GHER…RLGT, GHTG…ALLK, CNDS…VLVN, and EHSR…HQKT. Lys-264 carries the post-translational modification N6-acetyllysine. Residue Lys-282 forms a Glycyl lysine isopeptide (Lys-Gly) (interchain with G-Cter in ubiquitin) linkage. One copy of the WD 5 repeat lies at 283–324; sequence GHFGPINSVAFHPDGKSYSSGGEDGYVRIHYFDPQYFEFEFE. The residue at position 308 (Tyr-308) is a Phosphotyrosine.

The protein belongs to the eIF-3 subunit I family. Component of the eukaryotic translation initiation factor 3 (eIF-3) complex, which is composed of 13 subunits: EIF3A, EIF3B, EIF3C, EIF3D, EIF3E, EIF3F, EIF3G, EIF3H, EIF3I, EIF3J, EIF3K, EIF3L and EIF3M. The eIF-3 complex appears to include 3 stable modules: module A is composed of EIF3A, EIF3B, EIF3G and EIF3I; module B is composed of EIF3F, EIF3H, and EIF3M; and module C is composed of EIF3C, EIF3D, EIF3E, EIF3K and EIF3L. EIF3C of module C binds EIF3B of module A and EIF3H of module B, thereby linking the three modules. EIF3J is a labile subunit that binds to the eIF-3 complex via EIF3B. The eIF-3 complex interacts with RPS6KB1 under conditions of nutrient depletion. Mitogenic stimulation leads to binding and activation of a complex composed of MTOR and RPTOR, leading to phosphorylation and release of RPS6KB1 and binding of EIF4B to eIF-3. In terms of processing, phosphorylated by TGF-beta type II receptor.

It localises to the cytoplasm. Functionally, component of the eukaryotic translation initiation factor 3 (eIF-3) complex, which is required for several steps in the initiation of protein synthesis. The eIF-3 complex associates with the 40S ribosome and facilitates the recruitment of eIF-1, eIF-1A, eIF-2:GTP:methionyl-tRNAi and eIF-5 to form the 43S pre-initiation complex (43S PIC). The eIF-3 complex stimulates mRNA recruitment to the 43S PIC and scanning of the mRNA for AUG recognition. The eIF-3 complex is also required for disassembly and recycling of post-termination ribosomal complexes and subsequently prevents premature joining of the 40S and 60S ribosomal subunits prior to initiation. The eIF-3 complex specifically targets and initiates translation of a subset of mRNAs involved in cell proliferation, including cell cycling, differentiation and apoptosis, and uses different modes of RNA stem-loop binding to exert either translational activation or repression. The sequence is that of Eukaryotic translation initiation factor 3 subunit I (Eif3i) from Rattus norvegicus (Rat).